The primary structure comprises 894 residues: Protein NLP9 (894 aa).

An RWP-RK domain is found at 517–603 (QEISGARRLE…LDSVQGVEGG (87 aa)). The stretch at 578-598 (RKINKVNRSLRKIQTVLDSVQ) forms a coiled coil. Positions 732–763 (NTRIERGNGTVEPNHSISSSMSDSSNSSGAVL) are disordered. Residues 747–763 (SISSSMSDSSNSSGAVL) are compositionally biased toward low complexity. Residues 792–875 (TLTVKATYRE…HTVKFLVRDI (84 aa)) form the PB1 domain.

It localises to the nucleus. Functionally, probable transcription factor. The protein is Protein NLP9 (NLP9) of Arabidopsis thaliana (Mouse-ear cress).